Reading from the N-terminus, the 127-residue chain is Fluoride-specific ion channel FluC (127 aa).

The next 4 membrane-spanning stretches (helical) occupy residues 4-24, 38-58, 71-91, and 104-124; these read FSIL…RYLV, YGTL…IAAF, VIGL…MDNV, and LNIL…FQLL. Na(+)-binding residues include Gly-78 and Thr-81.

Belongs to the fluoride channel Fluc/FEX (TC 1.A.43) family.

The protein localises to the cell inner membrane. The catalysed reaction is fluoride(in) = fluoride(out). With respect to regulation, na(+) is not transported, but it plays an essential structural role and its presence is essential for fluoride channel function. Its function is as follows. Fluoride-specific ion channel. Important for reducing fluoride concentration in the cell, thus reducing its toxicity. The polypeptide is Fluoride-specific ion channel FluC (Vibrio parahaemolyticus serotype O3:K6 (strain RIMD 2210633)).